The following is a 474-amino-acid chain: Glutamate--tRNA ligase (474 aa).

Residues 9 to 19 (PSPTGYLHVGG) carry the 'HIGH' region motif. Positions 240 to 244 (KLSKR) match the 'KMSKS' region motif. Position 243 (K243) interacts with ATP.

This sequence belongs to the class-I aminoacyl-tRNA synthetase family. Glutamate--tRNA ligase type 1 subfamily. Monomer.

It is found in the cytoplasm. The catalysed reaction is tRNA(Glu) + L-glutamate + ATP = L-glutamyl-tRNA(Glu) + AMP + diphosphate. In terms of biological role, catalyzes the attachment of glutamate to tRNA(Glu) in a two-step reaction: glutamate is first activated by ATP to form Glu-AMP and then transferred to the acceptor end of tRNA(Glu). In Aliivibrio fischeri (strain MJ11) (Vibrio fischeri), this protein is Glutamate--tRNA ligase.